The following is a 114-amino-acid chain: Ribosome-binding factor A (114 aa).

The protein belongs to the RbfA family. Monomer. Binds 30S ribosomal subunits, but not 50S ribosomal subunits or 70S ribosomes.

The protein localises to the cytoplasm. Functionally, one of several proteins that assist in the late maturation steps of the functional core of the 30S ribosomal subunit. Associates with free 30S ribosomal subunits (but not with 30S subunits that are part of 70S ribosomes or polysomes). Required for efficient processing of 16S rRNA. May interact with the 5'-terminal helix region of 16S rRNA. The chain is Ribosome-binding factor A from Listeria innocua serovar 6a (strain ATCC BAA-680 / CLIP 11262).